The following is a 730-amino-acid chain: Protein folded gastrulation (730 aa).

A signal peptide spans 1–21; sequence MSPPNCLLAVLALTVFIGANN. N-linked (GlcNAc...) asparagine glycans are attached at residues N51 and N193. Residues 197-211 show a composition bias toward low complexity; the sequence is TPETSTSITPTSTTT. Residues 197-222 form a disordered region; the sequence is TPETSTSITPTSTTTFAVPSVPSGEA. N-linked (GlcNAc...) asparagine glycosylation is found at N252 and N289. Positions 361-385 are enriched in acidic residues; the sequence is ELEEEVGEEEVTATDILPSEEDEYT. The interval 361–424 is disordered; sequence ELEEEVGEEE…SPHPPEEPEI (64 aa). The span at 386-415 shows a compositional bias: low complexity; that stretch reads TETATTTGDTTVAEASMDTSTATSTSGQSS. N-linked (GlcNAc...) asparagine glycosylation is present at N459. Disordered stretches follow at residues 474–526 and 545–583; these read EDES…GGHK and KGKQRQQHQPQKQQLEPTSTEITSALTSTSTEDATTTTT. The segment covering 478–491 has biased composition (low complexity); it reads STTTATPEPSSSTP. The span at 504–513 shows a compositional bias: polar residues; it reads DNDNLMTNTI. The segment covering 567–583 has biased composition (low complexity); that stretch reads TSALTSTSTEDATTTTT. Residues N590 and N639 are each glycosylated (N-linked (GlcNAc...) asparagine). A compositionally biased stretch (low complexity) spans 663–676; that stretch reads SAASTESAGTAATT. The interval 663-683 is disordered; sequence SAASTESAGTAATTPNSSSNP. N-linked (GlcNAc...) asparagine glycosylation occurs at N678.

In terms of processing, may be highly O-glycosylated in its Ser/Thr-rich C-terminal part. In terms of tissue distribution, expressed in the invagination primordia in a pattern that precisely precedes the pattern of constrictions.

It localises to the secreted. The protein resides in the extracellular space. It is found in the extracellular matrix. Coordinates cell shape changes during formation of the ventral furrow and invagination of the posterior midgut primordium, by inducing apical constriction of cells in spatially and temporally defined manners. Could function as a secreted signal to initiate apical constriction by acting as a ligand for an unidentified G protein-coupled receptor, which in turn activates the G protein alpha subunit encoded by concertina, in neighboring cells. Such an intracellular pathway would ultimately induce contraction of the apical actin-myosin network. In the ventral furrow, fog appears to ensure that all the cells initiate constriction within several minutes of each other. In the posterior midgut invagination, fog appears to direct the ordered progression of constriction initiations out from a central region and also to delimit the peripheral extent of this spreading. This is Protein folded gastrulation (fog) from Drosophila melanogaster (Fruit fly).